Consider the following 404-residue polypeptide: MTPMKRSVQTQVSEPFTESWGEESLPELPTEQSLTEYSDLKEAPSAHTLYVGHLNPQFSVPVLACLLRDTLERLEMPVAREHIEVVRRPRKAYALVQVTVRRDTLASLPWRLQTALEEHLILKELAARGKELLLSEAQGPLSHREEEEEDSGLSPGPNPGSGVPLPAWPTHTLPDRPQAWQLQSCQGRPSGVCSDSAIVHHEIVGKDQLFQGAFLGSETRNMEFKRGSGEYLSLAFKHHVRRYVCAFLNSEGGSLLVGVEDSGLVRGIRCSHRDEDRARLLVDSILQGFKPQVFPDAYTLTFVPVISTSETNVPLKVIRLTVHTPKAQSQPQLYQTDQGEVFLRRDGSIQGPLSASAIQEWCRQRWLVELGKLEERVKVLTMEKEQLQQQLQQHGPMSCTCCVL.

Disordered stretches follow at residues 1-31 and 139-170; these read MTPMKRSVQTQVSEPFTESWGEESLPELPTE and GPLSHREEEEEDSGLSPGPNPGSGVPLPAWPT. Residues 7 to 16 are compositionally biased toward polar residues; it reads SVQTQVSEPF. Positions 152 to 165 are enriched in low complexity; it reads GLSPGPNPGSGVPL. 258 to 265 serves as a coordination point for ATP; the sequence is GVEDSGLV. A coiled-coil region spans residues 365 to 395; it reads RWLVELGKLEERVKVLTMEKEQLQQQLQQHG.

Belongs to the Schlafen family. Subgroup I subfamily.

This chain is Schlafen-like protein 1 (SLFNL1), found in Macaca fascicularis (Crab-eating macaque).